A 66-amino-acid polypeptide reads, in one-letter code: UPF0391 membrane protein AM1_5042 (66 aa).

The next 2 helical transmembrane spans lie at 4–24 (LTLTFLVVALIAAFLGFSGIA) and 28–47 (AAIAKILFCIFIVCFILVWP).

It belongs to the UPF0391 family.

It is found in the cell membrane. The protein is UPF0391 membrane protein AM1_5042 of Acaryochloris marina (strain MBIC 11017).